A 164-amino-acid chain; its full sequence is Hydroxylaminobenzene mutase HabB (164 aa).

4 helical membrane-spanning segments follow: residues Leu-16 to Met-36, Gly-50 to Gly-70, Phe-78 to Trp-98, and Leu-121 to Leu-141.

The protein localises to the cell membrane. It catalyses the reaction N-phenylhydroxylamine = 2-aminophenol. Addition of ZnSO(4) decreases the activity to 70%. Functionally, catalyzes the rearrangement of hydroxylaminobenzene to 2-aminophenol. The chain is Hydroxylaminobenzene mutase HabB (habB) from Ectopseudomonas oleovorans (Pseudomonas oleovorans).